The chain runs to 460 residues: tRNA modification GTPase MnmE (460 aa).

(6S)-5-formyl-5,6,7,8-tetrahydrofolate is bound by residues arginine 25, glutamate 87, and arginine 126. The 161-residue stretch at 221–381 (GLKVAIVGRP…LETAIANLVQ (161 aa)) folds into the TrmE-type G domain. K(+) is bound at residue asparagine 231. GTP-binding positions include 231–236 (NVGKSS), 250–256 (TDLPGTT), and 275–278 (DTAG). Position 235 (serine 235) interacts with Mg(2+). Threonine 250, leucine 252, and threonine 255 together coordinate K(+). Threonine 256 contributes to the Mg(2+) binding site. Lysine 460 contacts (6S)-5-formyl-5,6,7,8-tetrahydrofolate.

It belongs to the TRAFAC class TrmE-Era-EngA-EngB-Septin-like GTPase superfamily. TrmE GTPase family. Homodimer. Heterotetramer of two MnmE and two MnmG subunits. K(+) is required as a cofactor.

Its subcellular location is the cytoplasm. Functionally, exhibits a very high intrinsic GTPase hydrolysis rate. Involved in the addition of a carboxymethylaminomethyl (cmnm) group at the wobble position (U34) of certain tRNAs, forming tRNA-cmnm(5)s(2)U34. The chain is tRNA modification GTPase MnmE from Picosynechococcus sp. (strain ATCC 27264 / PCC 7002 / PR-6) (Agmenellum quadruplicatum).